The following is a 365-amino-acid chain: HLA class I histocompatibility antigen, A alpha chain (365 aa).

Positions 1–24 (MAVMAPRTLLLLLSGALALTQTWA) are cleaved as a signal peptide. The segment at 3–11 (VMAPRTLLL) is VL9 epitope. Residues 25 to 114 (GSHSMRYFFT…LRGYYNQSEA (90 aa)) are alpha-1. Over 25-308 (GSHSMRYFFT…ELSSQPTIPI (284 aa)) the chain is Extracellular. Tyr31 lines the a peptide antigen pocket. The residue at position 83 (Tyr83) is a Sulfotyrosine. Residues Thr97 and Tyr108 each coordinate a peptide antigen. A glycan (N-linked (GlcNAc...) asparagine) is linked at Asn110. Positions 115–206 (GSHTIQIMYG…ENGKETLQRT (92 aa)) are alpha-2. Cys125 and Cys188 are oxidised to a cystine. A peptide antigen is bound by residues Asp140, Thr167, Lys170, Tyr183, and Tyr195. The segment at 207–298 (DPPKTHMTHH…GLPKPLTLRW (92 aa)) is alpha-3. An Ig-like C1-type domain is found at 209 to 295 (PKTHMTHHPI…QHEGLPKPLT (87 aa)). Cys227 and Cys283 form a disulfide bridge. The segment at 299–308 (ELSSQPTIPI) is connecting peptide. The helical transmembrane segment at 309–332 (VGIIAGLVLLGAVITGAVVAAVMW) threads the bilayer. Residues 333–365 (RRKSSDRKGGSYTQAASSDSAQGSDVSLTACKV) lie on the Cytoplasmic side of the membrane. The segment at 339–365 (RKGGSYTQAASSDSAQGSDVSLTACKV) is disordered. Ser343 is subject to Phosphoserine. Phosphotyrosine is present on Tyr344. Positions 346 to 359 (QAASSDSAQGSDVS) are enriched in low complexity. A phosphoserine mark is found at Ser349, Ser350, Ser352, Ser356, and Ser359.

It belongs to the MHC class I family. As to quaternary structure, heterotrimer that consists of an alpha chain HLA-A, a beta chain B2M and a peptide (peptide-HLA-A-B2M). Early in biogenesis, HLA-A-B2M dimer interacts with the components of the peptide-loading complex composed of TAPBP, TAP1-TAP2, TAPBPL, PDIA3/ERP57 and CALR. Interacts with TAP1-TAP2 transporter via TAPBP; this interaction is obligatory for the loading of peptide epitopes delivered to the ER by TAP1-TAP2 transporter. Interacts with TAPBPL; TAPBPL binds peptide-free HLA-A-B2M complexes or those loaded with low affinity peptides, likely facilitating peptide exchange for higher affinity peptides. Only optimally assembled peptide-HLA-B2M trimer translocates to the surface of antigen-presenting cells, where it interacts with TCR and CD8 coreceptor on the surface of T cells. HLA-A (via polymorphic alpha-1 and alpha-2 domains) interacts with antigen-specific TCR (via CDR3 domains). One HLA-A molecule (mainly via nonpolymorphic alpha-3 domain) interacts with one CD8A homodimer (via CDR-like loop); this interaction ensures peptide-HLA-A-B2M recognition by CD8-positive T cells only. Alleles A*23:01; A*24:02 and A*32:01 interact (via Bw4 motif) with KIR3DL1 on NK cells; this interaction is direct. In terms of assembly, (Microbial infection) Interacts with HHV-8 MIR1 protein. (Microbial infection) Interacts with HTLV-1 accessory protein p12I. In terms of processing, (Microbial infection) Polyubiquitinated in a post ER compartment by interaction with human herpesvirus 8 MIR1 protein. This targets the protein for rapid degradation via the ubiquitin system. N-linked glycosylation at Asn-110. Ubiquitous.

It localises to the cell membrane. Its subcellular location is the endoplasmic reticulum membrane. Antigen-presenting major histocompatibility complex class I (MHCI) molecule. In complex with B2M/beta 2 microglobulin displays primarily viral and tumor-derived peptides on antigen-presenting cells for recognition by alpha-beta T cell receptor (TCR) on HLA-A-restricted CD8-positive T cells, guiding antigen-specific T cell immune response to eliminate infected or transformed cells. May also present self-peptides derived from the signal sequence of secreted or membrane proteins, although T cells specific for these peptides are usually inactivated to prevent autoreactivity. Both the peptide and the MHC molecule are recognized by TCR, the peptide is responsible for the fine specificity of antigen recognition and MHC residues account for the MHC restriction of T cells. Typically presents intracellular peptide antigens of 8 to 13 amino acids that arise from cytosolic proteolysis via IFNG-induced immunoproteasome or via endopeptidase IDE/insulin-degrading enzyme. Can bind different peptides containing allele-specific binding motifs, which are mainly defined by anchor residues at position 2 and 9. Its function is as follows. Allele A*01:01: Presents a restricted peptide repertoire including viral epitopes derived from IAV NP/nucleoprotein (CTELKLSDY), IAV PB1/polymerase basic protein 1 (VSDGGPNLY), HAdV-11 capsid L3/hexon protein (LTDLGQNLLY), SARS-CoV-2 3a/ORF3a (FTSDYYQLY) as well as tumor peptide antigens including MAGE1 (EADPTGHSY), MAGEA3 (EVDPIGHLY) and WT1 (TSEKRPFMCAY), all having in common a canonical motif with a negatively charged Asp or Glu residue at position 3 and a Tyr anchor residue at the C-terminus. A number of HLA-A*01:01-restricted peptides carry a post-translational modification with oxidation and N-terminal acetylation being the most frequent. Fails to present highly immunogenic peptides from the EBV latent antigens. In terms of biological role, allele A*02:01: A major allele in human populations, presents immunodominant viral epitopes derived from IAV M/matrix protein 1 (GILGFVFTL), HIV-1 env (TLTSCNTSV), HIV-1 gag-pol (ILKEPVHGV), HTLV-1 Tax (LLFGYPVYV), HBV C/core antigen (FLPSDFFPS), HCMV UL83/pp65 (NLVPMVATV) as well as tumor peptide antigens including MAGEA4 (GVYDGREHTV), WT1 (RMFPNAPYL) and CTAG1A/NY-ESO-1 (SLLMWITQC), all having in common hydrophobic amino acids at position 2 and at the C-terminal anchors. Functionally, allele A*03:01: Presents viral epitopes derived from IAV NP (ILRGSVAHK), HIV-1 nef (QVPLRPMTYK), HIV-1 gag-pol (AIFQSSMTK), SARS-CoV-2 N/nucleoprotein (KTFPPTEPK) as well as tumor peptide antigens including PMEL (LIYRRRLMK), NODAL (HAYIQSLLK), TRP-2 (RMYNMVPFF), all having in common hydrophobic amino acids at position 2 and Lys or Arg anchor residues at the C-terminus. May also display spliced peptides resulting from the ligation of two separate proteasomal cleavage products that are not contiguous in the parental protein. Allele A*11:01: Presents several immunodominant epitopes derived from HIV-1 gag-pol and HHV-4 EBNA4, containing the peptide motif with Val, Ile, Thr, Leu, Tyr or Phe at position 2 and Lys anchor residue at the C-terminus. Important in the control of HIV-1, EBV and HBV infections. Presents an immunodominant epitope derived from SARS-CoV-2 N/nucleoprotein (KTFPPTEPK). Its function is as follows. Allele A*23:01: Interacts with natural killer (NK) cell receptor KIR3DL1 and may contribute to functional maturation of NK cells and self-nonself discrimination during innate immune response. In terms of biological role, allele A*24:02: Presents viral epitopes derived from HIV-1 nef (RYPLTFGWCF), EBV lytic- and latent-cycle antigens BRLF1 (TYPVLEEMF), BMLF1 (DYNFVKQLF) and LMP2 (IYVLVMLVL), SARS-CoV nucleocapsid/N (QFKDNVILL), as well as tumor peptide antigens including PRAME (LYVDSLFFL), all sharing a common signature motif, namely an aromatic residue Tyr or Phe at position 2 and a nonhydrophobic anchor residue Phe, Leu or Iso at the C-terminus. Interacts with natural killer (NK) cell receptor KIR3DL1 and may contribute to functional maturation of NK cells and self-nonself discrimination during innate immune response. Functionally, allele A*26:01: Presents several epitopes derived from HIV-1 gag-pol (EVIPMFSAL, ETKLGKAGY) and env (LVSDGGPNLY), carrying as anchor residues preferentially Glu at position 1, Val or Thr at position 2 and Tyr at the C-terminus. Allele A*29:02: Presents peptides having a common motif, namely a Glu residue at position 2 and Tyr or Leu anchor residues at the C-terminus. Its function is as follows. Allele A*32:01: Interacts with natural killer (NK) cell receptor KIR3DL1 and may contribute to functional maturation of NK cells and self-nonself discrimination during innate immune response. In terms of biological role, allele A*68:01: Presents viral epitopes derived from IAV NP (KTGGPIYKR) and HIV-1 tat (ITKGLGISYGR), having a common signature motif namely, Val or Thr at position 2 and positively charged residues Arg or Lys at the C-terminal anchor. Functionally, allele A*74:01: Presents immunodominant HIV-1 epitopes derived from gag-pol (GQMVHQAISPR, QIYPGIKVR) and rev (RQIHSISER), carrying an aliphatic residue at position 2 and Arg anchor residue at the C-terminus. May contribute to viral load control in chronic HIV-1 infection. The chain is HLA class I histocompatibility antigen, A alpha chain from Homo sapiens (Human).